The chain runs to 231 residues: DNA mismatch repair protein MutH (231 aa).

The protein belongs to the MutH family.

It localises to the cytoplasm. Its function is as follows. Sequence-specific endonuclease that cleaves unmethylated GATC sequences. It is involved in DNA mismatch repair. The protein is DNA mismatch repair protein MutH of Klebsiella pneumoniae (strain 342).